Consider the following 871-residue polypeptide: MATERYNPRTSEPRWQKAWEEARLFETKNDDGRPTYYVLEMFPYPSGRIHIGHTRNYTMGDVVARYKRAKGYNVLHPMGWDAFGMPAENAAIQNKIHPKEWTYDNIATMRSQLKMMGLSLDWAREFATCDVDYYHRQQMLFIDFYKKGLVRRKTSKVNWDPVEQTVLANEQVIDGRGWRSGALVEQRELAQWFFKITDYAEDLLSAIDGLDDWPEKVRLMQRNWIGRSEGLSIRWALAEDTAPAGVGELEVYTTRPDTIFGASFLAVAPDHPLARKAAEGNPALATFIEECRHMGTSVAALETAEKKGFDTGIRVKHPFDAEWTLPVYVANFVLMEYGTGAIFGCPSGDQRDFDFANKYGLPVIPVVMPEGADAATFEITAEPYVDDGVMLNSRFLDGMSNKEAFEEVASRLEKETLDGKPVAKRKVNFRLRDWGVSRQRYWGCPIPMIHCDTCGVVPVPKEELPVKLPDDVDFDRPGNPLDRHPTWRHVKCPQCGADARRETDTMDTFVDSSWYFARFTSPHADSPVEKDVVNRWLPVDQYIGGIEHAILHLLYSRFFTRAMRDTGHLDLAEPFKGLFTQGMVVHETYRAEDGRWLTPAEVRIEGSAGERRAFEIATGKEVAIGPLEKMSKSKKNTVSPEDITESFGADTARWFMLSDSPPERDVEWTDDGAAGAHRFVQRAWRLITEAAPAIGDITPKAARDGDAAAISKPAHKALKAVGEDIERLAFNRAIARIHELVNDLQGPFAGLDKADEETRAAAREATEILIHLIAPFMPHLAEECWAAIGGKDLVAASRWPDFDPELVLDNLIVLPVQINGKKRGDLTIAREADQAAVEKAVLELDFVQKALNGAPPRKVIVVSQRIVNVVA.

The short motif at 43–53 is the 'HIGH' region element; the sequence is PYPSGRIHIGH. A 'KMSKS' region motif is present at residues 629–633; sequence KMSKS. Residue Lys632 coordinates ATP.

Belongs to the class-I aminoacyl-tRNA synthetase family.

It is found in the cytoplasm. It catalyses the reaction tRNA(Leu) + L-leucine + ATP = L-leucyl-tRNA(Leu) + AMP + diphosphate. The sequence is that of Leucine--tRNA ligase from Chelativorans sp. (strain BNC1).